Reading from the N-terminus, the 134-residue chain is D-ribose pyranase (134 aa).

His-20 (proton donor) is an active-site residue. Residues Asp-28, His-101, and 123-125 (YCN) each bind substrate.

It belongs to the RbsD / FucU family. RbsD subfamily. As to quaternary structure, homodecamer.

Its subcellular location is the cytoplasm. It catalyses the reaction beta-D-ribopyranose = beta-D-ribofuranose. It functions in the pathway carbohydrate metabolism; D-ribose degradation; D-ribose 5-phosphate from beta-D-ribopyranose: step 1/2. Catalyzes the interconversion of beta-pyran and beta-furan forms of D-ribose. The polypeptide is D-ribose pyranase (Pseudomonas fluorescens (strain Pf0-1)).